A 653-amino-acid polypeptide reads, in one-letter code: Dual specificity protein kinase shkB (653 aa).

The segment at 112–133 (NPNNNNNNSNNTNSSDSNQNYS) is disordered. The Protein kinase domain maps to 174–432 (YNREAKLGSG…FAEISKQRIL (259 aa)). ATP-binding positions include 180–188 (LGSGAFGSV) and lysine 201. The active-site Proton acceptor is aspartate 298. The 92-residue stretch at 534–625 (GFMAATSSKN…IKEPFEGGPF (92 aa)) folds into the SH2 domain.

It belongs to the protein kinase superfamily. TKL Ser/Thr protein kinase family. SH2 domain-containing protein kinase subfamily.

The protein localises to the membrane. It carries out the reaction L-seryl-[protein] + ATP = O-phospho-L-seryl-[protein] + ADP + H(+). The enzyme catalyses L-threonyl-[protein] + ATP = O-phospho-L-threonyl-[protein] + ADP + H(+). Its function is as follows. Required for proper chemotaxis and phagocytosis; proper spatiotemporal control of F-actin levels in chemotaxing cells. Negative regulator of the PI3K (phosphatidylinositol 3 kinase) pathway. Predominantly phosphorylates serines and threonines and tyrosines at a lower level. In Dictyostelium discoideum (Social amoeba), this protein is Dual specificity protein kinase shkB (shkB).